A 310-amino-acid polypeptide reads, in one-letter code: Glutaminase (310 aa).

7 residues coordinate substrate: Ser67, Asn118, Glu161, Asn168, Tyr192, Tyr244, and Val262.

Belongs to the glutaminase family. Homotetramer.

The catalysed reaction is L-glutamine + H2O = L-glutamate + NH4(+). This Legionella pneumophila (strain Lens) protein is Glutaminase.